A 295-amino-acid polypeptide reads, in one-letter code: Bifunctional protein FolD 1 (295 aa).

Residues 165–167 (GKS), Ile190, and Ile231 each bind NADP(+).

It belongs to the tetrahydrofolate dehydrogenase/cyclohydrolase family. As to quaternary structure, homodimer.

The enzyme catalyses (6R)-5,10-methylene-5,6,7,8-tetrahydrofolate + NADP(+) = (6R)-5,10-methenyltetrahydrofolate + NADPH. It catalyses the reaction (6R)-5,10-methenyltetrahydrofolate + H2O = (6R)-10-formyltetrahydrofolate + H(+). The protein operates within one-carbon metabolism; tetrahydrofolate interconversion. Its function is as follows. Catalyzes the oxidation of 5,10-methylenetetrahydrofolate to 5,10-methenyltetrahydrofolate and then the hydrolysis of 5,10-methenyltetrahydrofolate to 10-formyltetrahydrofolate. The polypeptide is Bifunctional protein FolD 1 (Rhizorhabdus wittichii (strain DSM 6014 / CCUG 31198 / JCM 15750 / NBRC 105917 / EY 4224 / RW1) (Sphingomonas wittichii)).